A 639-amino-acid chain; its full sequence is UvrABC system protein C (639 aa).

The GIY-YIG domain occupies 31–109; that stretch reads EQAGVYRMYD…IKKYQPKYNI (79 aa). A UVR domain is found at 218 to 253; it reads SAVIEQLVARMELASNELHFELAAKYRDQIVTLRKV.

The protein belongs to the UvrC family. In terms of assembly, interacts with UvrB in an incision complex.

It is found in the cytoplasm. The UvrABC repair system catalyzes the recognition and processing of DNA lesions. UvrC both incises the 5' and 3' sides of the lesion. The N-terminal half is responsible for the 3' incision and the C-terminal half is responsible for the 5' incision. The protein is UvrABC system protein C of Colwellia psychrerythraea (strain 34H / ATCC BAA-681) (Vibrio psychroerythus).